Consider the following 493-residue polypeptide: Probable cytosol aminopeptidase (493 aa).

Residues Lys256 and Asp261 each contribute to the Mn(2+) site. Residue Lys268 is part of the active site. Residues Asp279, Asp338, and Glu340 each coordinate Mn(2+). Arg342 is a catalytic residue.

Belongs to the peptidase M17 family. It depends on Mn(2+) as a cofactor.

It is found in the cytoplasm. It carries out the reaction Release of an N-terminal amino acid, Xaa-|-Yaa-, in which Xaa is preferably Leu, but may be other amino acids including Pro although not Arg or Lys, and Yaa may be Pro. Amino acid amides and methyl esters are also readily hydrolyzed, but rates on arylamides are exceedingly low.. The enzyme catalyses Release of an N-terminal amino acid, preferentially leucine, but not glutamic or aspartic acids.. In terms of biological role, presumably involved in the processing and regular turnover of intracellular proteins. Catalyzes the removal of unsubstituted N-terminal amino acids from various peptides. This is Probable cytosol aminopeptidase from Phytoplasma australiense.